The chain runs to 527 residues: N-acetylglutamate synthase, mitochondrial (527 aa).

A mitochondrion-targeting transit peptide spans 1-18 (MATAWVATALRSAAAARR). Positions 14 to 91 (AAARRLRSPG…PLESPAPPAG (78 aa)) are disordered. The amino-acid kinase domain (AAK) stretch occupies residues 19–369 (LRSPGGPGGS…CGTLFKNAER (351 aa)). Over residues 54 to 63 (AHAEDAEGAK) the composition is skewed to basic and acidic residues. Over residues 77–89 (TPLPTPLESPAPP) the composition is skewed to pro residues. In terms of domain architecture, N-acetyltransferase spans 368–519 (ERMLRVRNLD…HAKGLPDSFC (152 aa)). Substrate-binding positions include lysine 394, lysine 437, and 467–472 (RSRVTN).

This sequence belongs to the acetyltransferase family. Homodimer. Homotetramer. Post-translationally, probably processed by mitochondrial processing peptidase (MPP). The long form has not yet been isolated. Highly expressed in the liver and small intestine. Weakly expressed in the kidney, spleen and testis.

Its subcellular location is the mitochondrion matrix. It carries out the reaction L-glutamate + acetyl-CoA = N-acetyl-L-glutamate + CoA + H(+). It participates in amino-acid biosynthesis; L-arginine biosynthesis; N(2)-acetyl-L-ornithine from L-glutamate: step 1/4. With respect to regulation, increased by L-arginine. Functionally, plays a role in the regulation of ureagenesis by producing the essential cofactor N-acetylglutamate (NAG), thus modulating carbamoylphosphate synthase I (CPS1) activity. The chain is N-acetylglutamate synthase, mitochondrial (Nags) from Mus musculus (Mouse).